Consider the following 553-residue polypeptide: Transcriptional regulator HilA (553 aa).

Residues 11–107 constitute a DNA-binding region (ompR/PhoB-type); that stretch reads NKKFVFDDFI…LYGQGYRFNR (97 aa). Asp62 is modified (4-aspartylphosphate). The TPR repeat unit spans residues 372–405; the sequence is ADIKYYYGWNLFMAGQLEEALQTINECLKLDPTR.

Its function is as follows. The main transcriptional regulator of the Salmonella pathogenicity island 1 (SPI1) gene expression. Activates the expression of invasion genes by a direct action at their promoters and also indirectly by increasing the level of InvF. Also binds upstream of prgH and directly activates the expression of prgHIJK operon. In Salmonella typhimurium (strain LT2 / SGSC1412 / ATCC 700720), this protein is Transcriptional regulator HilA (hilA).